The following is a 509-amino-acid chain: ATP synthase subunit alpha (509 aa).

ATP is bound at residue Gly169–Thr176.

Belongs to the ATPase alpha/beta chains family. F-type ATPases have 2 components, CF(1) - the catalytic core - and CF(0) - the membrane proton channel. CF(1) has five subunits: alpha(3), beta(3), gamma(1), delta(1), epsilon(1). CF(0) has three main subunits: a(1), b(2) and c(9-12). The alpha and beta chains form an alternating ring which encloses part of the gamma chain. CF(1) is attached to CF(0) by a central stalk formed by the gamma and epsilon chains, while a peripheral stalk is formed by the delta and b chains.

It is found in the cell inner membrane. The enzyme catalyses ATP + H2O + 4 H(+)(in) = ADP + phosphate + 5 H(+)(out). Its function is as follows. Produces ATP from ADP in the presence of a proton gradient across the membrane. The alpha chain is a regulatory subunit. The protein is ATP synthase subunit alpha of Chelativorans sp. (strain BNC1).